The following is a 355-amino-acid chain: MSATPVTQLTPSSQPQQPCLPLLGASVTELTSWVQQQGQPAYRGKQLHDWIYHKGVRSLTDISVFSKQWRAAVADVPIGRSTIHHRSVASDGTVKYLLQLSDGEIVETVGIPTDKRLTVCVSTQVGCPMACDFCATGKGGYKRNLERHEIVDQVLTVQEDFQQRVSHVVFMGMGEPLLNTENVLAALRSLNQDVGIGQRSLTLSTVGIRDRISQLAEHHLQVTLAVSLHAPNQALREQLIPSARSYHIEDLLAECREYVAITGRRISFEYILLAGVNDLPEHALELSKHLRGFQNHVNLIPYNPISEVDYKRPSGDRIQAFLTVLQQQHIAVSVRYSRGLEADAACGQLRTKTSR.

Glu107 functions as the Proton acceptor in the catalytic mechanism. A Radical SAM core domain is found at Thr113 to Glu341. Cysteines 120 and 346 form a disulfide. Residues Cys127, Cys131, and Cys134 each contribute to the [4Fe-4S] cluster site. S-adenosyl-L-methionine contacts are provided by residues Gly174–Glu175, Ser204, Ser227–His229, and Asn303. The active-site S-methylcysteine intermediate is the Cys346.

The protein belongs to the radical SAM superfamily. RlmN family. The cofactor is [4Fe-4S] cluster.

The protein resides in the cytoplasm. It catalyses the reaction adenosine(2503) in 23S rRNA + 2 reduced [2Fe-2S]-[ferredoxin] + 2 S-adenosyl-L-methionine = 2-methyladenosine(2503) in 23S rRNA + 5'-deoxyadenosine + L-methionine + 2 oxidized [2Fe-2S]-[ferredoxin] + S-adenosyl-L-homocysteine. The enzyme catalyses adenosine(37) in tRNA + 2 reduced [2Fe-2S]-[ferredoxin] + 2 S-adenosyl-L-methionine = 2-methyladenosine(37) in tRNA + 5'-deoxyadenosine + L-methionine + 2 oxidized [2Fe-2S]-[ferredoxin] + S-adenosyl-L-homocysteine. In terms of biological role, specifically methylates position 2 of adenine 2503 in 23S rRNA and position 2 of adenine 37 in tRNAs. The sequence is that of Probable dual-specificity RNA methyltransferase RlmN from Trichormus variabilis (strain ATCC 29413 / PCC 7937) (Anabaena variabilis).